We begin with the raw amino-acid sequence, 901 residues long: HTH-type transcriptional regulator MalT (901 aa).

ATP is bound at residue 39-46 (SPAGYGKT). The 66-residue stretch at 829 to 894 (ELIRTSPLTQ…AAVQHAQKLL (66 aa)) folds into the HTH luxR-type domain. Positions 853–872 (NEQIAGELEVAATTIKTHIR) form a DNA-binding region, H-T-H motif.

Belongs to the MalT family. Monomer in solution. Oligomerizes to an active state in the presence of the positive effectors ATP and maltotriose.

Activated by ATP and maltotriose, which are both required for DNA binding. Its function is as follows. Positively regulates the transcription of the maltose regulon whose gene products are responsible for uptake and catabolism of malto-oligosaccharides. Specifically binds to the promoter region of its target genes, recognizing a short DNA motif called the MalT box. This Escherichia coli (strain 55989 / EAEC) protein is HTH-type transcriptional regulator MalT.